A 260-amino-acid polypeptide reads, in one-letter code: Shikimate dehydrogenase (260 aa).

The active-site Proton acceptor is the lysine 71. NADP(+) is bound at residue 124–128 (GAGGA).

It belongs to the shikimate dehydrogenase family.

The catalysed reaction is shikimate + NADP(+) = 3-dehydroshikimate + NADPH + H(+). The protein operates within metabolic intermediate biosynthesis; chorismate biosynthesis; chorismate from D-erythrose 4-phosphate and phosphoenolpyruvate: step 4/7. The sequence is that of Shikimate dehydrogenase (aroE) from Sulfurisphaera tokodaii (strain DSM 16993 / JCM 10545 / NBRC 100140 / 7) (Sulfolobus tokodaii).